The primary structure comprises 190 residues: dCTP deaminase, dUMP-forming (190 aa).

DCTP-binding positions include 101–106, Asp-119, 127–129, Gln-148, Tyr-162, Lys-170, and Gln-174; these read KSSLGR and TLE. Catalysis depends on Glu-129, which acts as the Proton donor/acceptor. Positions 160-190 are disordered; it reads HPYGSSRAGSKYQGQRGPTPSRSYQNFIRST. Polar residues predominate over residues 171–190; that stretch reads YQGQRGPTPSRSYQNFIRST.

This sequence belongs to the dCTP deaminase family. As to quaternary structure, homotrimer.

It catalyses the reaction dCTP + 2 H2O = dUMP + NH4(+) + diphosphate. It functions in the pathway pyrimidine metabolism; dUMP biosynthesis; dUMP from dCTP: step 1/1. Bifunctional enzyme that catalyzes both the deamination of dCTP to dUTP and the hydrolysis of dUTP to dUMP without releasing the toxic dUTP intermediate. In Mycobacterium tuberculosis (strain ATCC 25177 / H37Ra), this protein is dCTP deaminase, dUMP-forming.